Consider the following 30-residue polypeptide: ARICPRILMKCKKDSDCLAECICQEHGFCG.

Intrachain disulfides connect Cys4-Cys21, Cys11-Cys23, and Cys17-Cys29.

It belongs to the protease inhibitor I7 (squash-type serine protease inhibitor) family.

The protein resides in the secreted. Its function is as follows. Strongly inhibits trypsin, weakly inhibits chymotrypsin. This Cyclanthera pedata (Achocha) protein is Trypsin inhibitor 7.